We begin with the raw amino-acid sequence, 151 residues long: Transcriptional regulator MraZ (151 aa).

SpoVT-AbrB domains are found at residues 7–53 (EYDC…SQTE) and 82–125 (INEV…SPDL).

It belongs to the MraZ family. In terms of assembly, forms oligomers.

It localises to the cytoplasm. The protein resides in the nucleoid. The polypeptide is Transcriptional regulator MraZ (Cytophaga hutchinsonii (strain ATCC 33406 / DSM 1761 / CIP 103989 / NBRC 15051 / NCIMB 9469 / D465)).